We begin with the raw amino-acid sequence, 329 residues long: Glycerol-3-phosphate dehydrogenase [NAD(P)+] (329 aa).

The NADPH site is built by Trp-11 and Lys-101. Residues Lys-101, Gly-132, and Ser-134 each contribute to the sn-glycerol 3-phosphate site. Ala-136 provides a ligand contact to NADPH. Sn-glycerol 3-phosphate-binding residues include Lys-188, Asp-241, Ser-251, Arg-252, and Asn-253. Lys-188 acts as the Proton acceptor in catalysis. Arg-252 is a binding site for NADPH. 2 residues coordinate NADPH: Val-276 and Glu-278.

Belongs to the NAD-dependent glycerol-3-phosphate dehydrogenase family.

It is found in the cytoplasm. It catalyses the reaction sn-glycerol 3-phosphate + NAD(+) = dihydroxyacetone phosphate + NADH + H(+). The enzyme catalyses sn-glycerol 3-phosphate + NADP(+) = dihydroxyacetone phosphate + NADPH + H(+). It participates in membrane lipid metabolism; glycerophospholipid metabolism. In terms of biological role, catalyzes the reduction of the glycolytic intermediate dihydroxyacetone phosphate (DHAP) to sn-glycerol 3-phosphate (G3P), the key precursor for phospholipid synthesis. In Phytoplasma australiense, this protein is Glycerol-3-phosphate dehydrogenase [NAD(P)+].